A 161-amino-acid polypeptide reads, in one-letter code: ATP synthase subunit b (161 aa).

A helical transmembrane segment spans residues 2-22 (VIEWGTALYQLLAFAVLLLIL).

It belongs to the ATPase B chain family. As to quaternary structure, F-type ATPases have 2 components, F(1) - the catalytic core - and F(0) - the membrane proton channel. F(1) has five subunits: alpha(3), beta(3), gamma(1), delta(1), epsilon(1). F(0) has three main subunits: a(1), b(2) and c(10-14). The alpha and beta chains form an alternating ring which encloses part of the gamma chain. F(1) is attached to F(0) by a central stalk formed by the gamma and epsilon chains, while a peripheral stalk is formed by the delta and b chains.

The protein localises to the cell membrane. In terms of biological role, f(1)F(0) ATP synthase produces ATP from ADP in the presence of a proton or sodium gradient. F-type ATPases consist of two structural domains, F(1) containing the extramembraneous catalytic core and F(0) containing the membrane proton channel, linked together by a central stalk and a peripheral stalk. During catalysis, ATP synthesis in the catalytic domain of F(1) is coupled via a rotary mechanism of the central stalk subunits to proton translocation. Its function is as follows. Component of the F(0) channel, it forms part of the peripheral stalk, linking F(1) to F(0). This Shouchella clausii (strain KSM-K16) (Alkalihalobacillus clausii) protein is ATP synthase subunit b.